The primary structure comprises 152 residues: Sorting nexin-3 (152 aa).

A PX domain is found at 30–147 (NFLEIEVRSP…CAFIQDPQWD (118 aa)). Arg73, Ser75, Lys99, Arg104, and Arg113 together coordinate a 1,2-diacyl-sn-glycero-3-phospho-(1D-myo-inositol-3-phosphate).

Belongs to the sorting nexin family.

It is found in the cytoplasm. The protein resides in the golgi apparatus membrane. Its subcellular location is the prevacuolar compartment membrane. In terms of biological role, required for retention of late Golgi membrane proteins. Component of the retrieval machinery that functions by direct interaction with the cytosolic tails of certain TGN membrane proteins during the sorting/budding process at the prevacuolar compartment. Binds phosphatidylinositol 3-phosphate (PtdIns(P3)). This Yarrowia lipolytica (strain CLIB 122 / E 150) (Yeast) protein is Sorting nexin-3 (SNX3).